Consider the following 188-residue polypeptide: MSKVDHEKIQQAVVMILEAIGEDPAREGLEDTPKRVAKMYEEVFAGLNQDPKEHFATIFGEDHEELVLVKDIPFFSMCEHHLVPFFGKAHVGYIPKGGKVTGLSKLARAVEAVARRPQLQERITSTVADALVETLEPHGVIVVVEAEHMCMTMRGVKKPGAATVTSAVRGTFANDAAARAEVLSLIKG.

Zn(2+) contacts are provided by Cys78, His81, and Cys150.

It belongs to the GTP cyclohydrolase I family. As to quaternary structure, toroid-shaped homodecamer, composed of two pentamers of five dimers.

It carries out the reaction GTP + H2O = 7,8-dihydroneopterin 3'-triphosphate + formate + H(+). It functions in the pathway cofactor biosynthesis; 7,8-dihydroneopterin triphosphate biosynthesis; 7,8-dihydroneopterin triphosphate from GTP: step 1/1. This Halalkalibacterium halodurans (strain ATCC BAA-125 / DSM 18197 / FERM 7344 / JCM 9153 / C-125) (Bacillus halodurans) protein is GTP cyclohydrolase 1.